Here is a 213-residue protein sequence, read N- to C-terminus: Ion-translocating oxidoreductase complex subunit A (213 aa).

The Periplasmic segment spans residues 1-24 (MLLLWQSRIMPGSEANIYITMTEY). The helical transmembrane segment at 25–45 (LLLLIGTVLVNNFVLVKFLGL) threads the bilayer. Over 46–58 (CPFMGVSKKLETA) the chain is Cytoplasmic. A helical transmembrane segment spans residues 59 to 79 (IGMGLATTFVLTLASVCAYLV). Residues 80 to 86 (ESYVLRP) lie on the Periplasmic side of the membrane. Residues 87–107 (LGIEYLRTMSFILVIAVVVQF) form a helical membrane-spanning segment. Over 108 to 121 (TEMVVHKTSPTLYR) the chain is Cytoplasmic. Residues 122-142 (LLGIFLPLITTNCAVLGVALL) form a helical membrane-spanning segment. Over 143–153 (NINENHNFIQS) the chain is Periplasmic. A helical membrane pass occupies residues 154–174 (IIYGFGAAVGFSLVLILFASM). Topologically, residues 175–190 (RERIHVADVPAPFKGA) are cytoplasmic. A helical membrane pass occupies residues 191–211 (SIAMITAGLMSLAFMGFTGLV). At 212-213 (KL) the chain is on the periplasmic side.

This sequence belongs to the NqrDE/RnfAE family. In terms of assembly, the complex is composed of six subunits: RnfA, RnfB, RnfC, RnfD, RnfE and RnfG.

The protein localises to the cell inner membrane. Its function is as follows. Part of a membrane-bound complex that couples electron transfer with translocation of ions across the membrane. In Vibrio cholerae serotype O1 (strain ATCC 39541 / Classical Ogawa 395 / O395), this protein is Ion-translocating oxidoreductase complex subunit A.